A 437-amino-acid polypeptide reads, in one-letter code: ATP-dependent protease ATPase subunit HslU (437 aa).

ATP contacts are provided by residues valine 18, 60 to 65 (GCGKTE), aspartate 250, glutamate 315, and arginine 387.

It belongs to the ClpX chaperone family. HslU subfamily. In terms of assembly, a double ring-shaped homohexamer of HslV is capped on each side by a ring-shaped HslU homohexamer. The assembly of the HslU/HslV complex is dependent on binding of ATP.

Its subcellular location is the cytoplasm. Functionally, ATPase subunit of a proteasome-like degradation complex; this subunit has chaperone activity. The binding of ATP and its subsequent hydrolysis by HslU are essential for unfolding of protein substrates subsequently hydrolyzed by HslV. HslU recognizes the N-terminal part of its protein substrates and unfolds these before they are guided to HslV for hydrolysis. This is ATP-dependent protease ATPase subunit HslU from Methylobacterium nodulans (strain LMG 21967 / CNCM I-2342 / ORS 2060).